A 134-amino-acid chain; its full sequence is Phospholipase A2 (134 aa).

Positions 8, 10, and 12 each coordinate Ca(2+). 5 disulfide bridges follow: cysteine 9–cysteine 31, cysteine 30–cysteine 70, cysteine 37–cysteine 63, cysteine 61–cysteine 95, and cysteine 105–cysteine 113. The N-linked (GlcNAc...) asparagine glycan is linked to asparagine 13. Histidine 34 is an active-site residue. A Ca(2+)-binding site is contributed by aspartate 35. Aspartate 64 is a catalytic residue.

Belongs to the phospholipase A2 family. Group III subfamily. It depends on Ca(2+) as a cofactor. Expressed by the venom gland.

The protein resides in the secreted. The catalysed reaction is a 1,2-diacyl-sn-glycero-3-phosphocholine + H2O = a 1-acyl-sn-glycero-3-phosphocholine + a fatty acid + H(+). PLA2 catalyzes the calcium-dependent hydrolysis of the 2-acyl groups in 3-sn-phosphoglycerides. In Apis dorsata (Giant honeybee), this protein is Phospholipase A2.